The primary structure comprises 440 residues: Asparagine--tRNA ligase (440 aa).

This sequence belongs to the class-II aminoacyl-tRNA synthetase family. In terms of assembly, homodimer.

Its subcellular location is the cytoplasm. It carries out the reaction tRNA(Asn) + L-asparagine + ATP = L-asparaginyl-tRNA(Asn) + AMP + diphosphate + H(+). This is Asparagine--tRNA ligase from Roseiflexus castenholzii (strain DSM 13941 / HLO8).